We begin with the raw amino-acid sequence, 382 residues long: Guanylate kinase 1 (382 aa).

In terms of domain architecture, Guanylate kinase-like spans 128 to 310 (QKPIVISGPS…CYENLKKLLS (183 aa)). 135–142 (GPSGVGKG) is an ATP binding site. Catalysis depends on residues R168, R261, and R272. 2 residues coordinate ATP: N295 and D296.

It belongs to the guanylate kinase family. Monomer.

It is found in the cytoplasm. It localises to the nucleus. The catalysed reaction is GMP + ATP = GDP + ADP. Functionally, essential for recycling GMP and indirectly, cGMP. The chain is Guanylate kinase 1 (GK1) from Oryza sativa subsp. japonica (Rice).